A 191-amino-acid chain; its full sequence is uncharacterized protein (191 aa).

This is an uncharacterized protein from Agrobacterium tumefaciens (strain Ach5).